Consider the following 714-residue polypeptide: Pre-mRNA-splicing factor CLF1 (714 aa).

HAT repeat units follow at residues 48–80, 83–115, 117–149, 151–182, 184–215, 265–305, 315–347, 349–384, 394–430, 435–470, 472–510, and 555–586; these read SFQL…WEVK, HDFP…FELS, KNIT…TEET, KNYQ…YEKR, DEYD…FEMN, KEYE…FEKS, SIMI…ILQQ, DNNE…IWVK, GSIE…FEIR, NGLA…LEQK, GEWD…FEKN, and MRYA…FESS.

It belongs to the crooked-neck family. In terms of assembly, associated with the spliceosome.

It is found in the nucleus. Its function is as follows. Involved in pre-mRNA splicing and cell cycle progression. Required for the spliceosome assembly and initiation of the DNA replication. The polypeptide is Pre-mRNA-splicing factor CLF1 (CLF1) (Debaryomyces hansenii (strain ATCC 36239 / CBS 767 / BCRC 21394 / JCM 1990 / NBRC 0083 / IGC 2968) (Yeast)).